Consider the following 583-residue polypeptide: CD166 antigen (583 aa).

The signal sequence occupies residues 1 to 27 (MESKGASSCRLLFCLLISATVFRPGLG). 2 Ig-like V-type domains span residues 28–120 (WYTV…TEDN) and 125–234 (PTIV…KTIH). The Extracellular portion of the chain corresponds to 28–527 (WYTVNSAYGD…NREKVNDQAK (500 aa)). 2 disulfide bridges follow: C43/C113 and C157/C220. N91, N95, N167, N265, N306, N361, N457, N480, and N499 each carry an N-linked (GlcNAc...) asparagine glycan. 3 consecutive Ig-like C2-type domains span residues 245-328 (PTEQ…TAIT), 333-409 (DLSL…ESLT), and 416-501 (PQIK…LNVS). Cystine bridges form between C270–C313, C354–C392, and C435–C485. Residues 528 to 549 (LIVGIVVGLLLAALVAGVVYWL) traverse the membrane as a helical segment. At 550-583 (YMKKSKTASKHVNKDLGNMEENKKLEENNHKTEA) the chain is on the cytoplasmic side. Positions 562-583 (NKDLGNMEENKKLEENNHKTEA) are disordered. The span at 569-583 (EENKKLEENNHKTEA) shows a compositional bias: basic and acidic residues.

In terms of assembly, homodimer. Interacts (via extracellular domain) with CD6 (via extracellular domain). Homodimerization and interaction with CD6 involve the same region and cannot occur simultaneously. The affinity for CD6 is much higher than the affinity for self-association. Interacts (via glycosylated extracellular domain) with LGALS1 and LGALS3. Interaction with LGALS1 or LGALS3 inhibits interaction with CD6. Glycosylated. Detected on hematopoietic stem cells derived from umbilical cord blood. Detected on lymph vessel endothelial cells, skin and tonsil. Detected on peripheral blood monocytes. Detected on monocyte-derived dendritic cells (at protein level). Detected at low levels in spleen, placenta, liver. Expressed by activated T-cells, B-cells, monocytes and thymic epithelial cells. Isoform 1 and isoform 3 are detected in vein and artery endothelial cells, astrocytes, keratinocytes and artery smooth muscle cells. Expressed by neurons in the brain. Restricted expression in tumor cell lines. Detected in highly metastasizing melanoma cell lines.

The protein localises to the cell membrane. The protein resides in the cell projection. It localises to the axon. Its subcellular location is the dendrite. It is found in the secreted. Its function is as follows. Cell adhesion molecule that mediates both heterotypic cell-cell contacts via its interaction with CD6, as well as homotypic cell-cell contacts. Promotes T-cell activation and proliferation via its interactions with CD6. Contributes to the formation and maturation of the immunological synapse via its interactions with CD6. Mediates homotypic interactions with cells that express ALCAM. Acts as a ligand for the LILRB4 receptor, enhancing LILRB4-mediated inhibition of T cell proliferation. Required for normal hematopoietic stem cell engraftment in the bone marrow. Mediates attachment of dendritic cells onto endothelial cells via homotypic interaction. Inhibits endothelial cell migration and promotes endothelial tube formation via homotypic interactions. Required for normal organization of the lymph vessel network. Required for normal hematopoietic stem cell engraftment in the bone marrow. Plays a role in hematopoiesis; required for normal numbers of hematopoietic stem cells in bone marrow. Promotes in vitro osteoblast proliferation and differentiation. Promotes neurite extension, axon growth and axon guidance; axons grow preferentially on surfaces that contain ALCAM. Mediates outgrowth and pathfinding for retinal ganglion cell axons. Functionally, inhibits activities of membrane-bound isoforms by competing for the same interaction partners. Inhibits cell attachment via homotypic interactions. Promotes endothelial cell migration. Inhibits endothelial cell tube formation. This Homo sapiens (Human) protein is CD166 antigen (ALCAM).